Here is a 757-residue protein sequence, read N- to C-terminus: Catalase-peroxidase (757 aa).

Residues 1 to 28 (MENQSNDISKCPFHNGSMDNQAASGTKN) form a disordered region. The span at 17–28 (SMDNQAASGTKN) shows a compositional bias: polar residues. Positions 100 to 247 (WHSAGTYRVH…LAAVQMGLIY (148 aa)) form a cross-link, tryptophyl-tyrosyl-methioninium (Trp-Tyr) (with M-273). The active-site Proton acceptor is histidine 101. A cross-link (tryptophyl-tyrosyl-methioninium (Tyr-Met) (with W-100)) is located at residues 247-273 (YVNPEGPDGNPDPILAAKDIRDTFGRM). Residue histidine 288 coordinates heme b.

This sequence belongs to the peroxidase family. Peroxidase/catalase subfamily. Homodimer or homotetramer. Heme b is required as a cofactor. Post-translationally, formation of the three residue Trp-Tyr-Met cross-link is important for the catalase, but not the peroxidase activity of the enzyme.

The enzyme catalyses H2O2 + AH2 = A + 2 H2O. The catalysed reaction is 2 H2O2 = O2 + 2 H2O. Bifunctional enzyme with both catalase and broad-spectrum peroxidase activity. The sequence is that of Catalase-peroxidase from Flavobacterium johnsoniae (strain ATCC 17061 / DSM 2064 / JCM 8514 / BCRC 14874 / CCUG 350202 / NBRC 14942 / NCIMB 11054 / UW101) (Cytophaga johnsonae).